The primary structure comprises 501 residues: Ribose import ATP-binding protein RbsA (501 aa).

ABC transporter domains lie at 5–241 (LELK…VGRK) and 249–495 (LNLP…VGKQ). An ATP-binding site is contributed by 37–44 (GENGAGKS).

Belongs to the ABC transporter superfamily. Ribose importer (TC 3.A.1.2.1) family. The complex is composed of an ATP-binding protein (RbsA), two transmembrane proteins (RbsC) and a solute-binding protein (RbsB).

The protein resides in the cell inner membrane. It catalyses the reaction D-ribose(out) + ATP + H2O = D-ribose(in) + ADP + phosphate + H(+). Its function is as follows. Part of the ABC transporter complex RbsABC involved in ribose import. Responsible for energy coupling to the transport system. This Photorhabdus laumondii subsp. laumondii (strain DSM 15139 / CIP 105565 / TT01) (Photorhabdus luminescens subsp. laumondii) protein is Ribose import ATP-binding protein RbsA.